The chain runs to 451 residues: MSEKKIEELLKLLSMNNGDMSKLTANQRKEMKEYKFWKTQPVTKFDEEVKEEGPIHEEKTPADIPDEPLPLLPDFEWCAIDVDDEKQLEDVFVLLNENYVEDRDASFRFNYTREFFNWALKSPGWTPDWHIGVRVKASKKLIAFISAIPVRLRVRAKVIDSVEINFLCVHKQLRSKRLTPVLIKEITRRVNKRNIWHALYTAGVVLPAPVSTCRYAHRPLNWDKLYEVQFTDLPPNATKAEMVAKYTLPKATKTAGLRELRLEDVDQALALFNRYQSRFDIVQEFTKEEFIHWFINDKNVVEQDKRVVFSYVVESEGKVTDFFSFYSLPFTILNNSRYKDLGIGYLYYYASDADFKFEDRFDKEGTSLLKQRLSTLVQDACIIAAQNKMDVFNALSSQDNTLFLEDLKFGPGDGFLNFYLFNYRTFPITGGLTEDQHFDTEHRSNVGVVML.

Residues 34–37 (YKFW), 167–169 (LCV), and 175–179 (SKRLT) contribute to the tetradecanoyl-CoA site. L451 (proton acceptor; via carboxylate) is an active-site residue.

Belongs to the NMT family. Monomer.

Its subcellular location is the cytoplasm. It catalyses the reaction N-terminal glycyl-[protein] + tetradecanoyl-CoA = N-tetradecanoylglycyl-[protein] + CoA + H(+). Its function is as follows. Adds a myristoyl group to the N-terminal glycine residue of certain cellular proteins. The chain is Glycylpeptide N-tetradecanoyltransferase (NMT1) from Candida glabrata (strain ATCC 2001 / BCRC 20586 / JCM 3761 / NBRC 0622 / NRRL Y-65 / CBS 138) (Yeast).